The primary structure comprises 1301 residues: ABC transporter BEA3 (1301 aa).

The disordered stretch occupies residues 1–30 (MGKRTAENSAANGEGEEKHPEIGVDGRPEK). A compositionally biased stretch (basic and acidic residues) spans 15 to 30 (GEEKHPEIGVDGRPEK). 4 helical membrane-spanning segments follow: residues 54–74 (VGVI…IVFG), 103–123 (LYLL…NFAF), 177–197 (LGVF…AFIY), and 203–223 (LVTF…LPYI). The ABC transmembrane type-1 1 domain maps to 54–345 (VGVIASIGVG…ISTPLLAVSK (292 aa)). Asn-229 carries an N-linked (GlcNAc...) asparagine glycan. 2 helical membrane passes run 281–301 (FIAL…GLAF) and 313–333 (INQL…VTAM). An ABC transporter 1 domain is found at 378 to 667 (IILEDVTFAY…EAGLYYNLVN (290 aa)). ATP is bound at residue 413–420 (GPSGSGKS). The span at 442-454 (VEKPTDKKNNGGK) shows a compositional bias: basic and acidic residues. The disordered stretch occupies residues 442–461 (VEKPTDKKNNGGKEEDEQEL). 2 N-linked (GlcNAc...) asparagine glycosylation sites follow: Asn-511 and Asn-618. The tract at residues 682 to 708 (VIAKEERPSSVHEKAHTESTIEEKPLE) is disordered. The region spanning 735–1024 (ALTLFFSACA…ALSFGPNVAQ (290 aa)) is the ABC transmembrane type-1 2 domain. 6 helical membrane passes run 745–765 (GAAV…FGYL), 779–799 (SLMW…TFFL), 858–878 (SVFI…AFAW), 880–900 (LALV…YWRM), 961–981 (WVSL…AIVL), and 987–1007 (LLLS…SVLN). In terms of domain architecture, ABC transporter 2 spans 1060-1296 (IELENIYFKY…RGVYWQMCQS (237 aa)). An ATP-binding site is contributed by 1094–1101 (GASGSGKS).

It belongs to the ABC transporter superfamily. ABCB family. Multidrug resistance exporter (TC 3.A.1.201) subfamily.

It localises to the cell membrane. ABC transporter; part of the gene cluster that mediates the biosynthesis of beauvericin (BEA), a non-ribosomal cyclic hexadepsipeptide that shows antibiotic, antifungal, insecticidal, and cancer cell antiproliferative and antihaptotactic activity. Functions as a regulator of beauvericin production, rather than in BEA transport out of the cell. Beauvericin has low toxicity to the producing fungus and BEA3 does not play a role in detoxification and self-protection of the producing fungus. This chain is ABC transporter BEA3, found in Gibberella fujikuroi (strain CBS 195.34 / IMI 58289 / NRRL A-6831) (Bakanae and foot rot disease fungus).